Consider the following 231-residue polypeptide: Homeobox protein engrailed-1a (231 aa).

Disordered regions lie at residues 1–29 (MEDQRRGQGEEEDDSGSLPSPPLLPAHRN), 43–105 (GCKR…KDSQ), and 121–148 (DRPSSGPRTRKLKKKNNNTESDDKRPRT). The span at 43-56 (GCKRERERVTRDSG) shows a compositional bias: basic and acidic residues. Residues 68 to 102 (DGVSSSASSTVSSPVSSRQSNKVEQGSSKSSSPSK) show a composition bias toward low complexity. A DNA-binding region (homeobox) is located at residues 143 to 202 (DKRPRTAFTAEQLQRLKAEFQTSRYITEQRRQALARELGLNESQIKIWFQNKRAKIKKSS).

This sequence belongs to the engrailed homeobox family.

The protein resides in the nucleus. This is Homeobox protein engrailed-1a (eng1a) from Danio rerio (Zebrafish).